The chain runs to 635 residues: DNA-directed RNA polymerase subunit gamma (635 aa).

The Zn(2+) site is built by Cys74, Cys76, Cys89, and Cys92. Mg(2+) contacts are provided by Asp471, Asp473, and Asp475.

This sequence belongs to the RNA polymerase beta' chain family. RpoC1 subfamily. In terms of assembly, in cyanobacteria the RNAP catalytic core is composed of 2 alpha, 1 beta, 1 beta', 1 gamma and 1 omega subunit. When a sigma factor is associated with the core the holoenzyme is formed, which can initiate transcription. Requires Mg(2+) as cofactor. Zn(2+) is required as a cofactor.

The catalysed reaction is RNA(n) + a ribonucleoside 5'-triphosphate = RNA(n+1) + diphosphate. In terms of biological role, DNA-dependent RNA polymerase catalyzes the transcription of DNA into RNA using the four ribonucleoside triphosphates as substrates. The polypeptide is DNA-directed RNA polymerase subunit gamma (Prochlorococcus marinus (strain NATL2A)).